Here is a 591-residue protein sequence, read N- to C-terminus: Aspartate--tRNA(Asp/Asn) ligase (591 aa).

Position 175 (glutamate 175) interacts with L-aspartate. Residues 199–202 (QQFK) are aspartate. The L-aspartate site is built by arginine 221 and histidine 453. 221 to 223 (RDE) serves as a coordination point for ATP. Residue glutamate 486 coordinates ATP. Arginine 493 serves as a coordination point for L-aspartate. 538 to 541 (GIDR) serves as a coordination point for ATP.

The protein belongs to the class-II aminoacyl-tRNA synthetase family. Type 1 subfamily. As to quaternary structure, homodimer.

Its subcellular location is the cytoplasm. It carries out the reaction tRNA(Asx) + L-aspartate + ATP = L-aspartyl-tRNA(Asx) + AMP + diphosphate. Functionally, aspartyl-tRNA synthetase with relaxed tRNA specificity since it is able to aspartylate not only its cognate tRNA(Asp) but also tRNA(Asn). Reaction proceeds in two steps: L-aspartate is first activated by ATP to form Asp-AMP and then transferred to the acceptor end of tRNA(Asp/Asn). This chain is Aspartate--tRNA(Asp/Asn) ligase, found in Roseobacter denitrificans (strain ATCC 33942 / OCh 114) (Erythrobacter sp. (strain OCh 114)).